Reading from the N-terminus, the 161-residue chain is Glycine-rich RNA-binding protein blt801 (161 aa).

In terms of domain architecture, RRM spans 6–84 (YRCFVGGLRW…RNITVNEAQS (79 aa)). The segment at 72 to 161 (LDGRNITVNE…GGSGGGNWRE (90 aa)) is disordered. Ser87 carries the phosphoserine; by PKA modification. The span at 89–161 (GGGGFGGGGG…GGSGGGNWRE (73 aa)) shows a compositional bias: gly residues.

Binds single-stranded DNA and homoribopolymers of guanine, uracil and adenine, but not cytosine. Also binds RNA, with a preference for RNA containing a high proportion of adenine within an open loop structure. Possibly has a role in RNA transcription or processing during stress. The protein is Glycine-rich RNA-binding protein blt801 of Hordeum vulgare (Barley).